Here is a 270-residue protein sequence, read N- to C-terminus: tRNA pseudouridine synthase A (270 aa).

Asp-51 serves as the catalytic Nucleophile. Substrate is bound at residue Tyr-109.

Belongs to the tRNA pseudouridine synthase TruA family. In terms of assembly, homodimer.

It catalyses the reaction uridine(38/39/40) in tRNA = pseudouridine(38/39/40) in tRNA. In terms of biological role, formation of pseudouridine at positions 38, 39 and 40 in the anticodon stem and loop of transfer RNAs. The protein is tRNA pseudouridine synthase A of Burkholderia thailandensis (strain ATCC 700388 / DSM 13276 / CCUG 48851 / CIP 106301 / E264).